The following is a 336-amino-acid chain: Cell division protein ZipA (336 aa).

The Periplasmic segment spans residues 1 to 2 (ME). The chain crosses the membrane as a helical span at residues 3–23 (LHILFFILAGLLIAVLIGFSL). The Cytoplasmic segment spans residues 24-336 (WSARREKSRI…SRQSYLARVS (313 aa)). Residues 57–76 (SLNPQSYAQTTGQHGETEAD) form a disordered region. Residues 59–70 (NPQSYAQTTGQH) show a composition bias toward polar residues.

It belongs to the ZipA family. In terms of assembly, interacts with FtsZ via their C-terminal domains.

It localises to the cell inner membrane. Essential cell division protein that stabilizes the FtsZ protofilaments by cross-linking them and that serves as a cytoplasmic membrane anchor for the Z ring. Also required for the recruitment to the septal ring of downstream cell division proteins. This chain is Cell division protein ZipA, found in Actinobacillus pleuropneumoniae serotype 7 (strain AP76).